A 260-amino-acid polypeptide reads, in one-letter code: UPF0246 protein Bcep1808_2308 (260 aa).

Belongs to the UPF0246 family.

This chain is UPF0246 protein Bcep1808_2308, found in Burkholderia vietnamiensis (strain G4 / LMG 22486) (Burkholderia cepacia (strain R1808)).